The primary structure comprises 160 residues: uncharacterized protein (160 aa).

This is an uncharacterized protein from Bacillus subtilis (strain 168).